The sequence spans 160 residues: Transcription elongation factor GreA (160 aa).

Residues 11 to 38 (YDRLMKELERLKSERPAIIQAIKEAREE) are a coiled coil.

Belongs to the GreA/GreB family.

Its function is as follows. Necessary for efficient RNA polymerase transcription elongation past template-encoded arresting sites. The arresting sites in DNA have the property of trapping a certain fraction of elongating RNA polymerases that pass through, resulting in locked ternary complexes. Cleavage of the nascent transcript by cleavage factors such as GreA or GreB allows the resumption of elongation from the new 3'terminus. GreA releases sequences of 2 to 3 nucleotides. This is Transcription elongation factor GreA from Nitratidesulfovibrio vulgaris (strain DSM 19637 / Miyazaki F) (Desulfovibrio vulgaris).